Here is a 514-residue protein sequence, read N- to C-terminus: ATP synthase subunit alpha (514 aa).

Position 170–177 (170–177 (GDRQIGKT)) interacts with ATP.

The protein belongs to the ATPase alpha/beta chains family. F-type ATPases have 2 components, CF(1) - the catalytic core - and CF(0) - the membrane proton channel. CF(1) has five subunits: alpha(3), beta(3), gamma(1), delta(1), epsilon(1). CF(0) has three main subunits: a(1), b(2) and c(9-12). The alpha and beta chains form an alternating ring which encloses part of the gamma chain. CF(1) is attached to CF(0) by a central stalk formed by the gamma and epsilon chains, while a peripheral stalk is formed by the delta and b chains.

Its subcellular location is the cell inner membrane. It catalyses the reaction ATP + H2O + 4 H(+)(in) = ADP + phosphate + 5 H(+)(out). Its function is as follows. Produces ATP from ADP in the presence of a proton gradient across the membrane. The alpha chain is a regulatory subunit. The protein is ATP synthase subunit alpha of Alcanivorax borkumensis (strain ATCC 700651 / DSM 11573 / NCIMB 13689 / SK2).